The primary structure comprises 521 residues: D-aminoacyl-tRNA deacylase (521 aa).

Disordered stretches follow at residues 323–353 (AVGT…SEDS) and 499–521 (VFST…SSSS). The span at 343–353 (VDAERTESEDS) shows a compositional bias: basic and acidic residues. Low complexity predominate over residues 501-521 (STSSSSSSSSSSSSSSSSSSS).

This sequence belongs to the DtdA deacylase family. Monomer. It depends on Zn(2+) as a cofactor.

The catalysed reaction is a D-aminoacyl-tRNA + H2O = a tRNA + a D-alpha-amino acid + H(+). It carries out the reaction glycyl-tRNA(Ala) + H2O = tRNA(Ala) + glycine + H(+). In terms of biological role, D-aminoacyl-tRNA deacylase with broad substrate specificity. By recycling D-aminoacyl-tRNA to D-amino acids and free tRNA molecules, this enzyme counteracts the toxicity associated with the formation of D-aminoacyl-tRNA entities in vivo. This is D-aminoacyl-tRNA deacylase from Haloquadratum walsbyi (strain DSM 16790 / HBSQ001).